The sequence spans 346 residues: NADH-ubiquinone oxidoreductase chain 2 (346 aa).

Transmembrane regions (helical) follow at residues 1 to 21 (MNPHAKLISLISLLLGTTITI), 25 to 45 (HWIMAWTGLEINTLAIIPLIS), 60 to 80 (FLVQAAASALVLFSSMSNAWA), 96 to 116 (MLLTAAIAIKLGLVPFHFWFP), 124 to 144 (LTTALLLSTLMKLPPMAILLM), 149 to 169 (LNPTVLTSMALASAALGGWMG), 178 to 198 (ILAFSSIAHLGWMTMIIIYNP), 200 to 220 (LTLLTFYLYILMTATVFLSLN), 242 to 262 (AALMLTLLSLAGLPPLTGFMP), 274 to 294 (EMTTVATIIALLSLLGLFFYL), and 325 to 345 (IAILSSLSAILLPISPMILAA).

It belongs to the complex I subunit 2 family.

The protein localises to the mitochondrion inner membrane. The enzyme catalyses a ubiquinone + NADH + 5 H(+)(in) = a ubiquinol + NAD(+) + 4 H(+)(out). Functionally, core subunit of the mitochondrial membrane respiratory chain NADH dehydrogenase (Complex I) that is believed to belong to the minimal assembly required for catalysis. Complex I functions in the transfer of electrons from NADH to the respiratory chain. The immediate electron acceptor for the enzyme is believed to be ubiquinone. The polypeptide is NADH-ubiquinone oxidoreductase chain 2 (MT-ND2) (Struthio camelus (Common ostrich)).